The chain runs to 605 residues: Probable potassium transport system protein Kup (605 aa).

Transmembrane regions (helical) follow at residues 17 to 37 (GLVF…IFAL), 45 to 65 (VFGI…VEYA), 96 to 116 (IAFV…DGVI), 140 to 160 (LGTL…FQFK), 165 to 185 (VAAA…VSGL), 211 to 231 (GISA…GEAL), 246 to 266 (AWYF…AFAL), 286 to 306 (LYIP…QALI), 338 to 358 (IYIG…MLIF), 367 to 387 (AYGL…TIIF), 394 to 414 (WKVP…ISNL), and 417 to 437 (LPHG…TILI).

Belongs to the HAK/KUP transporter (TC 2.A.72) family.

Its subcellular location is the cell inner membrane. The catalysed reaction is K(+)(in) + H(+)(in) = K(+)(out) + H(+)(out). Transport of potassium into the cell. Likely operates as a K(+):H(+) symporter. This is Probable potassium transport system protein Kup from Geotalea uraniireducens (strain Rf4) (Geobacter uraniireducens).